A 691-amino-acid polypeptide reads, in one-letter code: Dynamin-1-like protein (691 aa).

The Dynamin-type G domain occupies 22–301 (IIQLPQIAVV…LMHHIRDCLP (280 aa)). Residues 32-39 (GTQSSGKS) are G1 motif. Position 32–40 (32–40 (GTQSSGKSS)) interacts with GTP. The G2 motif stretch occupies residues 58–60 (VTR). The segment at 145–148 (DLPG) is G3 motif. The interval 214-217 (TKLD) is G4 motif. GTP is bound by residues 214–220 (TKLDLMD) and 245–248 (NRSQ). The G5 motif stretch occupies residues 244–247 (VNRS). The segment at 343–488 (YCNTIEGTAK…NEMVHNLVAI (146 aa)) is middle domain. Basic and acidic residues-rich tracts occupy residues 522–531 (LPTSVPRDKM) and 551–563 (KKGDEGQGEEKTK). A disordered region spans residues 522–573 (LPTSVPRDKMAGGAQAEQEGGTGTWRGMLKKGDEGQGEEKTKLQSSIPASPQ). Positions 599–690 (CEVIERLIKS…VIAEIRETHL (92 aa)) constitute a GED domain. Residues 609–623 (YFLIVRKNIQDSVPK) are important for homodimerization.

It belongs to the TRAFAC class dynamin-like GTPase superfamily. Dynamin/Fzo/YdjA family. Homotetramer; dimerizes through the N-terminal GTP-middle region of one molecule binding to the GED domain of another DNM1L molecule. Oligomerizes in a GTP-dependent manner to form membrane-associated tubules with a spiral pattern.

The protein resides in the cytoplasm. It localises to the cytosol. The protein localises to the golgi apparatus. Its subcellular location is the endomembrane system. It is found in the mitochondrion outer membrane. The protein resides in the peroxisome. It localises to the membrane. The protein localises to the clathrin-coated pit. Its subcellular location is the cytoplasmic vesicle. It is found in the secretory vesicle. The protein resides in the synaptic vesicle membrane. It catalyses the reaction GTP + H2O = GDP + phosphate + H(+). In terms of biological role, functions in mitochondrial and peroxisomal division. Mediates membrane fission through oligomerization into membrane-associated tubular structures that wrap around the scission site to constrict and sever the mitochondrial membrane through a GTP hydrolysis-dependent mechanism. The specific recruitment at scission sites is mediated by membrane receptors like MFF, MIEF1 and MIEF2 for mitochondrial membranes. While the recruitment by the membrane receptors is GTP-dependent, the following hydrolysis of GTP induces the dissociation from the receptors and allows DNM1L filaments to curl into closed rings that are probably sufficient to sever a double membrane. May play a role in the circadian control of mitochondrial ATP production. In Danio rerio (Zebrafish), this protein is Dynamin-1-like protein.